The chain runs to 146 residues: Large ribosomal subunit protein uL15 (146 aa).

A compositionally biased stretch (basic and acidic residues) spans 1–13 (MKLHELKAAEGSR). The tract at residues 1 to 56 (MKLHELKAAEGSRRVRNRVGRGAGSGNGKTSGRGQKGQKARSGGGVRPGFEGGQLP) is disordered. 2 stretches are compositionally biased toward gly residues: residues 21-35 (RGAG…GRGQ) and 42-52 (SGGGVRPGFEG).

It belongs to the universal ribosomal protein uL15 family. Part of the 50S ribosomal subunit.

In terms of biological role, binds to the 23S rRNA. The chain is Large ribosomal subunit protein uL15 from Staphylococcus haemolyticus (strain JCSC1435).